We begin with the raw amino-acid sequence, 2157 residues long: Conidial yellow pigment biosynthesis polyketide synthase (2157 aa).

The N-terminal acylcarrier protein transacylase domain (SAT) stretch occupies residues Tyr-8 to His-244. In terms of domain architecture, Ketosynthase family 3 (KS3) spans Leu-376–Asp-807. Active-site for beta-ketoacyl synthase activity residues include Cys-548, His-683, and His-725. Positions Phe-912–Asp-1232 are malonyl-CoA:ACP transacylase (MAT) domain. Ser-1001 serves as the catalytic For acyl/malonyl transferase activity. The interval Thr-1290 to Pro-1603 is product template (PT) domain. Positions Gln-1294 to Ala-1425 are N-terminal hotdog fold. Positions Gln-1294–Asp-1598 constitute a PKS/mFAS DH domain. His-1326 functions as the Proton acceptor; for dehydratase activity in the catalytic mechanism. Residues Ala-1453 to Asp-1598 form a C-terminal hotdog fold region. Residue Asp-1511 is the Proton donor; for dehydratase activity of the active site. A disordered region spans residues Ser-1607–Met-1638. Residues Lys-1608–Pro-1619 are compositionally biased toward polar residues. Residues Ser-1645–Ser-1722 enclose the Carrier 1 domain. Ser-1682 bears the O-(pantetheine 4'-phosphoryl)serine mark. A disordered region spans residues Val-1725–Pro-1760. Over residues Asn-1741 to Pro-1759 the composition is skewed to polar residues. One can recognise a Carrier 2 domain in the interval Ile-1767–Pro-1844. Ser-1804 is modified (O-(pantetheine 4'-phosphoryl)serine). The interval Val-1847 to Gln-1888 is disordered. A compositionally biased stretch (polar residues) spans Val-1851 to Asn-1878. Positions Asp-1877–Leu-2149 are claisen cyclase domain. The active-site For thioesterase activity is the Ser-1967.

It depends on pantetheine 4'-phosphate as a cofactor.

It catalyses the reaction 6 malonyl-CoA + acetyl-CoA + 6 H(+) = naphtopyrone YWA1 + 6 CO2 + 7 CoA + H2O. The protein operates within polyketide biosynthesis; heptaketide naphthopyrone YWA1 biosynthesis. Its function is as follows. Non-reducing polyketide synthase that condenses acetate units to form a heptaketide naphthopyrene YWA1, a yellow pigment found in mature asexual spores (conidia), via a polyketomethylene intermediate step. In Emericella nidulans (strain FGSC A4 / ATCC 38163 / CBS 112.46 / NRRL 194 / M139) (Aspergillus nidulans), this protein is Conidial yellow pigment biosynthesis polyketide synthase.